We begin with the raw amino-acid sequence, 546 residues long: Membrane protein insertase YidC (546 aa).

The chain crosses the membrane as a helical span at residues 6-26; it reads NLLLIALLFVSFMIWQAWQVD. Over residues 30 to 44 the composition is skewed to low complexity; that stretch reads QPTAQTTQQTTNTAT. Residues 30-55 are disordered; that stretch reads QPTAQTTQQTTNTATGDKASQAVPGS. 4 consecutive transmembrane segments (helical) span residues 344–364, 419–439, 457–477, and 498–518; these read KFIHSFVGNWGFSIIVITFIV, LGGCLPLIIQMPIFLALYYML, LSAQDPYYILPILMGITMYFI, and PVIFTVFFLWFPAGLVLYYIV.

Belongs to the OXA1/ALB3/YidC family. Type 1 subfamily. Interacts with the Sec translocase complex via SecD. Specifically interacts with transmembrane segments of nascent integral membrane proteins during membrane integration.

The protein localises to the cell inner membrane. Its function is as follows. Required for the insertion and/or proper folding and/or complex formation of integral membrane proteins into the membrane. Involved in integration of membrane proteins that insert both dependently and independently of the Sec translocase complex, as well as at least some lipoproteins. Aids folding of multispanning membrane proteins. The polypeptide is Membrane protein insertase YidC (Yersinia pestis).